We begin with the raw amino-acid sequence, 205 residues long: Methylthioribulose-1-phosphate dehydratase (205 aa).

2 residues coordinate Zn(2+): H98 and H100.

The protein belongs to the aldolase class II family. MtnB subfamily. The cofactor is Zn(2+).

It catalyses the reaction 5-(methylsulfanyl)-D-ribulose 1-phosphate = 5-methylsulfanyl-2,3-dioxopentyl phosphate + H2O. It functions in the pathway amino-acid biosynthesis; L-methionine biosynthesis via salvage pathway; L-methionine from S-methyl-5-thio-alpha-D-ribose 1-phosphate: step 2/6. In terms of biological role, catalyzes the dehydration of methylthioribulose-1-phosphate (MTRu-1-P) into 2,3-diketo-5-methylthiopentyl-1-phosphate (DK-MTP-1-P). In Gluconacetobacter diazotrophicus (strain ATCC 49037 / DSM 5601 / CCUG 37298 / CIP 103539 / LMG 7603 / PAl5), this protein is Methylthioribulose-1-phosphate dehydratase.